The sequence spans 287 residues: Pantothenate synthetase (287 aa).

An ATP-binding site is contributed by 30 to 37 (MGALHSGH). Catalysis depends on histidine 37, which acts as the Proton donor. Glutamine 61 is a binding site for (R)-pantoate. Beta-alanine is bound at residue glutamine 61. Residue 152–155 (GQKD) participates in ATP binding. Glutamine 158 lines the (R)-pantoate pocket. ATP-binding positions include isoleucine 181 and 189–192 (ESSR).

The protein belongs to the pantothenate synthetase family. As to quaternary structure, homodimer.

The protein localises to the cytoplasm. It carries out the reaction (R)-pantoate + beta-alanine + ATP = (R)-pantothenate + AMP + diphosphate + H(+). It functions in the pathway cofactor biosynthesis; (R)-pantothenate biosynthesis; (R)-pantothenate from (R)-pantoate and beta-alanine: step 1/1. Functionally, catalyzes the condensation of pantoate with beta-alanine in an ATP-dependent reaction via a pantoyl-adenylate intermediate. This is Pantothenate synthetase from Corynebacterium efficiens (strain DSM 44549 / YS-314 / AJ 12310 / JCM 11189 / NBRC 100395).